The sequence spans 171 residues: Adenine phosphoribosyltransferase (171 aa).

It belongs to the purine/pyrimidine phosphoribosyltransferase family. As to quaternary structure, homodimer.

It is found in the cytoplasm. The catalysed reaction is AMP + diphosphate = 5-phospho-alpha-D-ribose 1-diphosphate + adenine. The protein operates within purine metabolism; AMP biosynthesis via salvage pathway; AMP from adenine: step 1/1. In terms of biological role, catalyzes a salvage reaction resulting in the formation of AMP, that is energically less costly than de novo synthesis. The polypeptide is Adenine phosphoribosyltransferase (Gloeobacter violaceus (strain ATCC 29082 / PCC 7421)).